Consider the following 81-residue polypeptide: Photosystem I iron-sulfur center (81 aa).

2 4Fe-4S ferredoxin-type domains span residues 2–31 (AHAVKIYDTCIGCTQCVRACPTDVLEMIPW) and 39–68 (IASAPRTEDCVGCKRCESRCPTDFLSVRVY). Residues C11, C14, C17, C21, C48, C51, C54, and C58 each contribute to the [4Fe-4S] cluster site.

In terms of assembly, the eukaryotic PSI reaction center is composed of at least 11 subunits. [4Fe-4S] cluster serves as cofactor.

Its subcellular location is the plastid. It is found in the chloroplast thylakoid membrane. It carries out the reaction reduced [plastocyanin] + hnu + oxidized [2Fe-2S]-[ferredoxin] = oxidized [plastocyanin] + reduced [2Fe-2S]-[ferredoxin]. In terms of biological role, apoprotein for the two 4Fe-4S centers FA and FB of photosystem I (PSI); essential for photochemical activity. FB is the terminal electron acceptor of PSI, donating electrons to ferredoxin. The C-terminus interacts with PsaA/B/D and helps assemble the protein into the PSI complex. Required for binding of PsaD and PsaE to PSI. PSI is a plastocyanin-ferredoxin oxidoreductase, converting photonic excitation into a charge separation, which transfers an electron from the donor P700 chlorophyll pair to the spectroscopically characterized acceptors A0, A1, FX, FA and FB in turn. The chain is Photosystem I iron-sulfur center from Marchantia polymorpha (Common liverwort).